The following is a 124-amino-acid chain: Fluoride-specific ion channel FluC 1 (124 aa).

The next 4 membrane-spanning stretches (helical) occupy residues 7–27, 32–52, 58–78, and 93–113; these read IQSKQLYKIFLLIVGSILGAI, LNNYFWVNISGAALLGLIVGL, IQFFLVIGFCGSFTTFSGWIL, and AGLICSNLLGGFTALSVTFWI. Na(+)-binding residues include glycine 68 and threonine 71.

This sequence belongs to the fluoride channel Fluc/FEX (TC 1.A.43) family.

The protein resides in the cell inner membrane. It carries out the reaction fluoride(in) = fluoride(out). Na(+) is not transported, but it plays an essential structural role and its presence is essential for fluoride channel function. Fluoride-specific ion channel. Important for reducing fluoride concentration in the cell, thus reducing its toxicity. This chain is Fluoride-specific ion channel FluC 1, found in Prochlorococcus marinus (strain SARG / CCMP1375 / SS120).